We begin with the raw amino-acid sequence, 610 residues long: Zinc metalloproteinase-disintegrin-like halysase (610 aa).

The N-terminal stretch at M1 to S20 is a signal peptide. Residues I21 to A182 constitute a propeptide that is removed on maturation. The 197-residue stretch at K199 to P395 folds into the Peptidase M12B domain. Residue N218 is glycosylated (N-linked (GlcNAc...) asparagine). Intrachain disulfides connect C310–C390, C350–C374, and C352–C357. H335 contacts Zn(2+). E336 is a catalytic residue. H339 and H345 together coordinate Zn(2+). One can recognise a Disintegrin domain in the interval P403–N488. 6 residues coordinate Ca(2+): V405, N408, F410, E412, E415, and D418. 14 cysteine pairs are disulfide-bonded: C406/C435, C417/C430, C419/C425, C429/C452, C443/C449, C448/C474, C461/C481, C468/C499, C492/C504, C511/C561, C526/C572, C539/C549, C556/C598, and C592/C603. The D/ECD-tripeptide signature appears at E467 to D469.

The protein belongs to the venom metalloproteinase (M12B) family. P-III subfamily. P-IIIa sub-subfamily. In terms of assembly, monomer. It depends on Zn(2+) as a cofactor. In terms of tissue distribution, expressed by the venom gland.

The protein localises to the secreted. Its activity is regulated as follows. Inhibited by EDTA and EGTA. Not inhibited by PMSF, antipain, pepstatin, and iodoacetamide. Strongly inhibits the collagen-induced human platelet aggregation (inhibition of alpha-2/beta-1 (ITGA2/ITGB1) integrin). Hydrolyzes the Aalpha-chain of fibrinogen, without cleavage of Bbeta- and gamma-chains. Degrades type IV collagen (but not types I, II and V), fibronectin and vitronectin and also integrins alpha-1/beta-1 (ITGA1/ITGB1) and alpha-5/beta/1 (ITGA5/ITGB1) (but not alpha-V/beta-3 (ITGAV/ITGB3) and alpha-V/beta-5 (ITGAV/ITGB5) integrins). Both metalloproteinase (peptidase M12B) and disintegrin-like domains (recombinantly expressed and named halydin) play characteristic roles to inhibit human platelet aggregation. Induces apoptosis and strongly inhibits proliferation of endothelial cells as well as adhesion of the cells to extracellular matrix proteins. The apoptosis is closely associated with activation of caspase-3 and decreased level of Bcl-X(L)/Bax. Apohalysase, which lacks metalloprotease activity, is also able to induce the apoptosis. Cleaves insulin B chain at '34-His-|-Leu-35', '37-Glu-|-Ala-38', '38-Ala-|-Leu-39', '39-Leu-|-Tyr-40', '40-Tyr-|-Leu-41', '47-Gly-|-Phe-48' and '48-Phe-|-Phe-49' bonds. The sequence is that of Zinc metalloproteinase-disintegrin-like halysase from Gloydius halys (Chinese water mocassin).